A 166-amino-acid chain; its full sequence is Ribosome maturation factor RimP (166 aa).

The protein belongs to the RimP family.

It is found in the cytoplasm. Its function is as follows. Required for maturation of 30S ribosomal subunits. This is Ribosome maturation factor RimP from Rickettsia akari (strain Hartford).